We begin with the raw amino-acid sequence, 219 residues long: Interleukin-12 subunit alpha (219 aa).

Residues 1 to 22 (MCPARSLLLVATLVLLDYLSLA) form the signal peptide. Residues asparagine 24, asparagine 93, and asparagine 107 are each glycosylated (N-linked (GlcNAc...) asparagine). Cystine bridges form between cysteine 37/cysteine 110, cysteine 64/cysteine 196, and cysteine 85/cysteine 123.

It belongs to the IL-6 superfamily. As to quaternary structure, heterodimer with IL12B; disulfide-linked. This heterodimer is known as interleukin IL-12. Heterodimer with EBI3/IL27B; not disulfide-linked. This heterodimer is known as interleukin IL-35. Interacts with NBR1; this interaction promotes IL-12 secretion.

Its subcellular location is the secreted. In terms of biological role, heterodimerizes with IL12B to form the IL-12 cytokine or with EBI3/IL27B to form the IL-35 cytokine. IL-12 is primarily produced by professional antigen-presenting cells (APCs) such as B-cells and dendritic cells (DCs) as well as macrophages and granulocytes and regulates T-cell and natural killer-cell responses, induces the production of interferon-gamma (IFN-gamma), favors the differentiation of T-helper 1 (Th1) cells and is an important link between innate resistance and adaptive immunity. Mechanistically, exerts its biological effects through a receptor composed of IL12R1 and IL12R2 subunits. Binding to the receptor results in the rapid tyrosine phosphorylation of a number of cellular substrates including the JAK family kinases TYK2 and JAK2. In turn, recruited STAT4 gets phosphorylated and translocates to the nucleus where it regulates cytokine/growth factor responsive genes. As part of IL-35, plays essential roles in maintaining the immune homeostasis of the liver microenvironment and also functions as an immune-suppressive cytokine. Mediates biological events through unconventional receptors composed of IL12RB2 and gp130/IL6ST heterodimers or homodimers. Signaling requires the transcription factors STAT1 and STAT4, which form a unique heterodimer that binds to distinct DNA sites. This is Interleukin-12 subunit alpha (IL12A) from Macaca mulatta (Rhesus macaque).